Reading from the N-terminus, the 108-residue chain is UPF0102 protein Sden_0272 (108 aa).

This sequence belongs to the UPF0102 family.

This is UPF0102 protein Sden_0272 from Shewanella denitrificans (strain OS217 / ATCC BAA-1090 / DSM 15013).